The primary structure comprises 81 residues: Small ribosomal subunit protein bS16 (81 aa).

Belongs to the bacterial ribosomal protein bS16 family.

This Treponema denticola (strain ATCC 35405 / DSM 14222 / CIP 103919 / JCM 8153 / KCTC 15104) protein is Small ribosomal subunit protein bS16.